The following is a 485-amino-acid chain: Aspartyl/glutamyl-tRNA(Asn/Gln) amidotransferase subunit B (485 aa).

Belongs to the GatB/GatE family. GatB subfamily. As to quaternary structure, heterotrimer of A, B and C subunits.

The catalysed reaction is L-glutamyl-tRNA(Gln) + L-glutamine + ATP + H2O = L-glutaminyl-tRNA(Gln) + L-glutamate + ADP + phosphate + H(+). It carries out the reaction L-aspartyl-tRNA(Asn) + L-glutamine + ATP + H2O = L-asparaginyl-tRNA(Asn) + L-glutamate + ADP + phosphate + 2 H(+). In terms of biological role, allows the formation of correctly charged Asn-tRNA(Asn) or Gln-tRNA(Gln) through the transamidation of misacylated Asp-tRNA(Asn) or Glu-tRNA(Gln) in organisms which lack either or both of asparaginyl-tRNA or glutaminyl-tRNA synthetases. The reaction takes place in the presence of glutamine and ATP through an activated phospho-Asp-tRNA(Asn) or phospho-Glu-tRNA(Gln). The protein is Aspartyl/glutamyl-tRNA(Asn/Gln) amidotransferase subunit B of Borrelia hermsii (strain HS1 / DAH).